The sequence spans 179 residues: Protein YjaZ (179 aa).

The sequence is that of Protein YjaZ from Escherichia coli (strain K12).